The primary structure comprises 256 residues: MAAVALTYMIPPATPLAIIDFDMLPEDDESEEVGFEYEDLLDWQLKEAVDRRDLESFTILIEENWCHDLTLENGDNLLGYMIKQGHALTEEWYDLIGVTTTCHANPEGELPIDLLRKHLGSCRCNLESMNCDLVEYIIRTCYAHPINRDYVYHRMDTSRYTHKRLNRNHNLTLSIEKKPIIVEAPPMEEEEISEVEDALNVLQRLCAQEEGDNKEAETNNNNYVFPWMTPAYELPEQLTFYDMPMTPFNCNNVMYC.

Positions 187 to 223 (MEEEEISEVEDALNVLQRLCAQEEGDNKEAETNNNNY) form a coiled coil.

This is an uncharacterized protein from Ostreid herpesvirus 1 (isolate France) (OsHV-1).